The chain runs to 159 residues: Nucleotide-binding protein Psyr_4087 (159 aa).

The protein belongs to the YajQ family.

Its function is as follows. Nucleotide-binding protein. The protein is Nucleotide-binding protein Psyr_4087 of Pseudomonas syringae pv. syringae (strain B728a).